A 105-amino-acid polypeptide reads, in one-letter code: Large ribosomal subunit protein uL18c (105 aa).

This sequence belongs to the universal ribosomal protein uL18 family. As to quaternary structure, part of the 50S ribosomal subunit; contacts the 5S rRNA.

The protein localises to the plastid. The protein resides in the chloroplast. Binds 5S rRNA, forms part of the central protuberance of the 50S subunit. This Gracilaria tenuistipitata var. liui (Red alga) protein is Large ribosomal subunit protein uL18c (rpl18).